We begin with the raw amino-acid sequence, 333 residues long: MSKLITIERHILEQQKNFPEATGELTDLLSDVAFAAKLVRREVVRAGLVDILGFAGSTNVQGEEVKKLDLFANDKIINAIGQHGRFAIMGSEENEEIITPPNNENGSYALLFDPLDGSSNIDVNVSVGTIFSIYKIKNSDPRKADISDCLQKGSEQVAAGYVIYGSSVVMVYTTGNGVHGFTYDPTIGEFLLSHENIVTPKHGKYYSINEGSYAQFNDTTKKYLDYIKEEDSATGRPYSTRYIGSLVADFHRNLLTGGVFVYPPTTNHPNGKLRLMYEGNPLAYICEQAGGRATDGRRRILDIDPSELHQRTPLYIGSEDDVRVAEEFEQGIR.

Mg(2+)-binding residues include Glu-92, Asp-113, Leu-115, and Asp-116. Substrate contacts are provided by residues 116–119, Asn-209, Tyr-242, and Lys-272; that span reads DGSS. Glu-278 contributes to the Mg(2+) binding site.

Belongs to the FBPase class 1 family. Homotetramer. It depends on Mg(2+) as a cofactor.

Its subcellular location is the cytoplasm. It carries out the reaction beta-D-fructose 1,6-bisphosphate + H2O = beta-D-fructose 6-phosphate + phosphate. Its pathway is carbohydrate biosynthesis; Calvin cycle. This Chlorobium phaeovibrioides (strain DSM 265 / 1930) (Prosthecochloris vibrioformis (strain DSM 265)) protein is Fructose-1,6-bisphosphatase class 1.